A 425-amino-acid chain; its full sequence is Serine--tRNA ligase (425 aa).

L-serine is bound at residue 228-230 (TAE). Position 259–261 (259–261 (RSE)) interacts with ATP. L-serine is bound at residue Glu-282. 346 to 349 (EIAS) is an ATP binding site. Residue Ser-382 coordinates L-serine.

This sequence belongs to the class-II aminoacyl-tRNA synthetase family. Type-1 seryl-tRNA synthetase subfamily. As to quaternary structure, homodimer. The tRNA molecule binds across the dimer.

The protein localises to the cytoplasm. The enzyme catalyses tRNA(Ser) + L-serine + ATP = L-seryl-tRNA(Ser) + AMP + diphosphate + H(+). The catalysed reaction is tRNA(Sec) + L-serine + ATP = L-seryl-tRNA(Sec) + AMP + diphosphate + H(+). It functions in the pathway aminoacyl-tRNA biosynthesis; selenocysteinyl-tRNA(Sec) biosynthesis; L-seryl-tRNA(Sec) from L-serine and tRNA(Sec): step 1/1. Catalyzes the attachment of serine to tRNA(Ser). Is also able to aminoacylate tRNA(Sec) with serine, to form the misacylated tRNA L-seryl-tRNA(Sec), which will be further converted into selenocysteinyl-tRNA(Sec). The chain is Serine--tRNA ligase from Rickettsia prowazekii (strain Madrid E).